We begin with the raw amino-acid sequence, 287 residues long: Syntaxin-11 (287 aa).

The stretch at 41–71 (LESLYRVIQDIQDENQLLLIDVRRLGRQNVR) forms a coiled coil. The t-SNARE coiled-coil homology domain occupies 204 to 266 (LNEIESRHRE…GEAKAQVRKA (63 aa)).

It belongs to the syntaxin family. As to quaternary structure, interacts with the SNARE proteins SNAP-23 and VAMP.

It is found in the membrane. The protein localises to the golgi apparatus. Its subcellular location is the trans-Golgi network membrane. In terms of biological role, SNARE that acts to regulate protein transport between late endosomes and the trans-Golgi network. The chain is Syntaxin-11 (Stx11) from Mus musculus (Mouse).